Reading from the N-terminus, the 47-residue chain is Alpha-conotoxin VxXXC (47 aa).

Hydroxyproline; partial is present on residues Pro-10, Pro-21, and Pro-29. Disulfide bonds link Cys-18–Cys-27, Cys-23–Cys-35, Cys-28–Cys-45, and Cys-33–Cys-47.

Homodimer. Pseudo-homodimer (identical sequence, different post-translational modifications). HydroxyPro-10 is only found in a minor form. In terms of tissue distribution, expressed by the venom duct.

It localises to the secreted. Alpha-conotoxins act on postsynaptic membranes, they bind to the nicotinic acetylcholine receptors (nAChR) and thus inhibit them. Through its two C-terminal domains, this homodimeric protein would bind to two nAChR allosteric sites, located outside the nAChR C-loop of the principal binding face and at the adjacent binding interface in a clockwise direction. This toxin specifically blocks mammalian neuronal nAChR of the alpha-7/CHRNA7, alpha-3-beta-2/CHRNA3-CHRNB2 and alpha-4-beta-2/CHRNA4-CHRNB2 subtypes. VxXXA and VxXXB inhibit alpha-7/CHRNA7 and alpha-3-beta-2/CHRNA3-CHRNB2 nAChR more efficiently than VxXXC. VxXXB is the most effective at inhibiting alpha-4-beta-2/CHRNA4-CHRNB2 nAChR, followed by VxXXC and VxXXA. The sequence is that of Alpha-conotoxin VxXXC from Conus vexillum (Flag cone).